We begin with the raw amino-acid sequence, 557 residues long: Membrane protein insertase YidC (557 aa).

The chain crosses the membrane as a helical span at residues 1–21 (MNWLRNSLIAAILVITYVLFI). The interval 52-71 (SDDAVASSATEESDVPEVSV) is disordered. 5 consecutive transmembrane segments (helical) span residues 346–366 (TIDY…LDFI), 369–389 (LVGN…AVFF), 439–459 (FGGC…YWMI), 470–490 (FFLW…PLLM), and 517–537 (PIGF…YWVV).

Belongs to the OXA1/ALB3/YidC family. Type 1 subfamily. In terms of assembly, interacts with the Sec translocase complex via SecD. Specifically interacts with transmembrane segments of nascent integral membrane proteins during membrane integration.

It is found in the cell inner membrane. Functionally, required for the insertion and/or proper folding and/or complex formation of integral membrane proteins into the membrane. Involved in integration of membrane proteins that insert both dependently and independently of the Sec translocase complex, as well as at least some lipoproteins. Aids folding of multispanning membrane proteins. In Saccharophagus degradans (strain 2-40 / ATCC 43961 / DSM 17024), this protein is Membrane protein insertase YidC.